Consider the following 1603-residue polypeptide: Pentafunctional AROM polypeptide (1603 aa).

A 3-dehydroquinate synthase region spans residues 1–384 (MGVPTKISIL…YEPRASTVSN (384 aa)). NAD(+)-binding positions include 44–46 (DTN), 81–84 (ESSK), 114–116 (GGV), and D119. R130 contributes to the 7-phospho-2-dehydro-3-deoxy-D-arabino-heptonate binding site. 139–140 (TT) contacts NAD(+). Residues D146 and K152 each coordinate 7-phospho-2-dehydro-3-deoxy-D-arabino-heptonate. K161 contacts NAD(+). N162 contributes to the 7-phospho-2-dehydro-3-deoxy-D-arabino-heptonate binding site. NAD(+)-binding positions include 179–182 (FLNT) and N190. Position 194 (E194) interacts with Zn(2+). 7-phospho-2-dehydro-3-deoxy-D-arabino-heptonate contacts are provided by residues 194-197 (EVIK) and K250. Catalysis depends on E260, which acts as the Proton acceptor; for 3-dehydroquinate synthase activity. 7-phospho-2-dehydro-3-deoxy-D-arabino-heptonate contacts are provided by residues 264 to 268 (RNLLN) and H271. H271 is a Zn(2+) binding site. H275 (proton acceptor; for 3-dehydroquinate synthase activity) is an active-site residue. 2 residues coordinate 7-phospho-2-dehydro-3-deoxy-D-arabino-heptonate: H287 and K356. Position 287 (H287) interacts with Zn(2+). Positions 397–842 (VYPGFPKSLN…WNTLAQTFKV (446 aa)) are EPSP synthase. The active-site For EPSP synthase activity is C824. A shikimate kinase region spans residues 872–1064 (AASIFIIGMR…RRKENTFFVS (193 aa)). 879–886 (GMRGAGKT) is an ATP binding site. The segment at 1065 to 1285 (LTFPDLTPAS…AAPGQLSARE (221 aa)) is 3-dehydroquinase. H1188 serves as the catalytic Proton acceptor; for 3-dehydroquinate dehydratase activity. K1216 functions as the Schiff-base intermediate with substrate; for 3-dehydroquinate dehydratase activity in the catalytic mechanism. A shikimate dehydrogenase region spans residues 1298-1603 (AKKFAVIGKP…GVSSSDDTIS (306 aa)).

In the N-terminal section; belongs to the sugar phosphate cyclases superfamily. Dehydroquinate synthase family. This sequence in the 2nd section; belongs to the EPSP synthase family. It in the 3rd section; belongs to the shikimate kinase family. The protein in the 4th section; belongs to the type-I 3-dehydroquinase family. In the C-terminal section; belongs to the shikimate dehydrogenase family. In terms of assembly, homodimer. Zn(2+) serves as cofactor.

Its subcellular location is the cytoplasm. The catalysed reaction is 7-phospho-2-dehydro-3-deoxy-D-arabino-heptonate = 3-dehydroquinate + phosphate. The enzyme catalyses 3-dehydroquinate = 3-dehydroshikimate + H2O. It carries out the reaction shikimate + NADP(+) = 3-dehydroshikimate + NADPH + H(+). It catalyses the reaction shikimate + ATP = 3-phosphoshikimate + ADP + H(+). The catalysed reaction is 3-phosphoshikimate + phosphoenolpyruvate = 5-O-(1-carboxyvinyl)-3-phosphoshikimate + phosphate. The protein operates within metabolic intermediate biosynthesis; chorismate biosynthesis; chorismate from D-erythrose 4-phosphate and phosphoenolpyruvate: step 2/7. Its pathway is metabolic intermediate biosynthesis; chorismate biosynthesis; chorismate from D-erythrose 4-phosphate and phosphoenolpyruvate: step 3/7. It functions in the pathway metabolic intermediate biosynthesis; chorismate biosynthesis; chorismate from D-erythrose 4-phosphate and phosphoenolpyruvate: step 4/7. It participates in metabolic intermediate biosynthesis; chorismate biosynthesis; chorismate from D-erythrose 4-phosphate and phosphoenolpyruvate: step 5/7. The protein operates within metabolic intermediate biosynthesis; chorismate biosynthesis; chorismate from D-erythrose 4-phosphate and phosphoenolpyruvate: step 6/7. Its function is as follows. The AROM polypeptide catalyzes 5 consecutive enzymatic reactions in prechorismate polyaromatic amino acid biosynthesis. This is Pentafunctional AROM polypeptide from Paracoccidioides brasiliensis (strain Pb03).